Here is a 149-residue protein sequence, read N- to C-terminus: Ribonuclease-like 3 (149 aa).

The N-terminal stretch at 1–22 is a signal peptide; it reads MGIHQCTAVVLLLLCASLSTYG. At Gln-23 the chain carries Pyrrolidone carboxylic acid. His-38 serves as the catalytic Proton acceptor. 3 disulfides stabilise this stretch: Cys-48–Cys-109, Cys-66–Cys-120, and Cys-84–Cys-135. 67 to 71 serves as a coordination point for substrate; that stretch reads KEVNT. Residue His-142 is the Proton donor of the active site.

It belongs to the pancreatic ribonuclease family. Cleavage between Arg-55 and Arg-56 is catalyzed by a membrane-localized Gram-negative bacterium protease (OmpT in E.coli). The excised fragment is then transported to the bacterium cytosol for cleavage of the disulfide bridge linking Cys-48 and Cys-109, thus separating the N-terminal and LF-ZF3. LF-ZF3 but not the N-terminal peptide possesses bactericidal activity. In terms of tissue distribution, strongly expressed in the adult liver and gut, and weakly in the heart and testis.

It localises to the secreted. Its function is as follows. Ribonuclease. Angiogenic. Plays a role in host defense. Exhibits strong antibacterial activity against Gram-negative bacteria but mild antibacterial activity against Gram-positive bacteria. The RNase activity is not required for the bactericidal activity. This Danio rerio (Zebrafish) protein is Ribonuclease-like 3.